Consider the following 994-residue polypeptide: Transposase for transposon Tn2501 (994 aa).

Belongs to the transposase 7 family.

Functionally, required for transposition of transposon Tn2501. This Escherichia coli protein is Transposase for transposon Tn2501 (tnpA).